We begin with the raw amino-acid sequence, 411 residues long: Bifunctional protein GlmU (411 aa).

Positions Met1–Asn204 are pyrophosphorylase. UTP is bound by residues Leu6–Gly9, Gln74, and Gly79. N-acetyl-alpha-D-glucosamine 1-phosphate contacts are provided by Thr80, Gly130, Asn142, and Asn158. Residues Gly205 to Leu224 form a linker region. Residues Asn225 to Asn411 form an N-acetyltransferase region. His308 (proton acceptor) is an active-site residue. Acetyl-CoA-binding residues include Ala384 and Lys401.

This sequence in the N-terminal section; belongs to the N-acetylglucosamine-1-phosphate uridyltransferase family. It in the C-terminal section; belongs to the transferase hexapeptide repeat family.

The enzyme catalyses N-acetyl-alpha-D-glucosamine 1-phosphate + UTP + H(+) = UDP-N-acetyl-alpha-D-glucosamine + diphosphate. It catalyses the reaction alpha-D-glucosamine 1-phosphate + acetyl-CoA = N-acetyl-alpha-D-glucosamine 1-phosphate + CoA + H(+). It participates in nucleotide-sugar biosynthesis; UDP-N-acetyl-alpha-D-glucosamine biosynthesis; N-acetyl-alpha-D-glucosamine 1-phosphate from alpha-D-glucosamine 6-phosphate (route II): step 2/2. It functions in the pathway nucleotide-sugar biosynthesis; UDP-N-acetyl-alpha-D-glucosamine biosynthesis; UDP-N-acetyl-alpha-D-glucosamine from N-acetyl-alpha-D-glucosamine 1-phosphate: step 1/1. Functionally, catalyzes the last two sequential reactions in the de novo biosynthetic pathway for UDP-N-acetyl-glucosamine (UDP-GlcNAc). Responsible for the acetylation of GlcN-1-P to GlcNAc-1-P, and for the uridyl transfer from UTP to GlcNAc-1-P, to produce UDP-GlcNAc and pyrophosphate. The protein is Bifunctional protein GlmU of Methanococcus maripaludis (strain C7 / ATCC BAA-1331).